Reading from the N-terminus, the 89-residue chain is UPF0237 protein LMOf2365_0562 (89 aa).

Residues 4 to 78 (VLTVIGKDNV…EDLQVKIHIQ (75 aa)) form the ACT domain.

The protein belongs to the UPF0237 family.

This chain is UPF0237 protein LMOf2365_0562, found in Listeria monocytogenes serotype 4b (strain F2365).